Reading from the N-terminus, the 178-residue chain is 5,6,7,8-tetrahydromethanopterin hydro-lyase (178 aa).

Catalysis depends on His-33, which acts as the Proton donor. Asp-35, Leu-64, Lys-82, Thr-84, and Gln-99 together coordinate substrate.

This sequence belongs to the formaldehyde-activating enzyme family.

Its subcellular location is the cytoplasm. The enzyme catalyses 5,6,7,8-tetrahydromethanopterin + formaldehyde = 5,10-methylenetetrahydromethanopterin + H2O. Its function is as follows. Catalyzes the condensation of formaldehyde with tetrahydromethanopterin (H(4)MPT) to 5,10-methylenetetrahydromethanopterin. This is 5,6,7,8-tetrahydromethanopterin hydro-lyase (faeA) from Methanosarcina barkeri (strain Fusaro / DSM 804).